We begin with the raw amino-acid sequence, 545 residues long: Glucose-6-phosphate isomerase (545 aa).

Glu351 functions as the Proton donor in the catalytic mechanism. Residues His382 and Lys510 contribute to the active site.

This sequence belongs to the GPI family.

The protein resides in the cytoplasm. It carries out the reaction alpha-D-glucose 6-phosphate = beta-D-fructose 6-phosphate. The protein operates within carbohydrate biosynthesis; gluconeogenesis. Its pathway is carbohydrate degradation; glycolysis; D-glyceraldehyde 3-phosphate and glycerone phosphate from D-glucose: step 2/4. In terms of biological role, catalyzes the reversible isomerization of glucose-6-phosphate to fructose-6-phosphate. This Helicobacter pylori (strain Shi470) protein is Glucose-6-phosphate isomerase.